A 213-amino-acid polypeptide reads, in one-letter code: Penicillin-binding protein activator LpoB (213 aa).

The signal sequence occupies residues 1–19 (MTKMSRYALITALAMFLAG). Cysteine 20 carries the N-palmitoyl cysteine lipid modification. A lipid anchor (S-diacylglycerol cysteine) is attached at cysteine 20. Residues 28 to 74 (PVEEVKPAPEQPAEPQQPVPTVPSVPTIPQQPGPIEHEDQTAPPAPH) form a disordered region. The span at 36-50 (PEQPAEPQQPVPTVP) shows a compositional bias: pro residues.

This sequence belongs to the LpoB family. As to quaternary structure, interacts with PBP1b.

Its subcellular location is the cell outer membrane. In terms of biological role, regulator of peptidoglycan synthesis that is essential for the function of penicillin-binding protein 1B (PBP1b). The sequence is that of Penicillin-binding protein activator LpoB from Escherichia coli O157:H7.